Reading from the N-terminus, the 872-residue chain is Exoglucanase A (872 aa).

The first 40 residues, 1-40 (MSTLGKRAGVRRRVRAVATAATATALVAVPLTTLATSASA), serve as a signal peptide directing secretion. Residues 41–477 (APVHVDNPYA…PVIGGTTPVE (437 aa)) are catalytic. Disulfide bonds link Cys-140/Cys-202 and Cys-374/Cys-428. Residue Asp-188 is the Proton donor of the active site. Asp-410 (nucleophile) is an active-site residue. 3 consecutive Fibronectin type-III domains span residues 484-569 (VPTG…TQSG), 579-667 (VPAG…TQTG), and 677-765 (VPTG…TQAA). The CBM2 domain occupies 763 to 872 (QAATSGGCTV…TLNGVACTLG (110 aa)). The cysteines at positions 770 and 869 are disulfide-linked.

This sequence belongs to the glycosyl hydrolase 6 (cellulase B) family.

The enzyme catalyses Hydrolysis of (1-&gt;4)-beta-D-glucosidic linkages in cellulose and cellotetraose, releasing cellobiose from the non-reducing ends of the chains.. Its function is as follows. This enzyme hydrolyzes 1,4-beta-D-glucosidic linkages of cellulose. Weak activity against carboxymethylcellulose, bacterial microcrystalline cellulose and barley beta-glucan. Also has weak endoglucanase activity. Hydrolyzes glucosidic bonds with inversion of anomeric configuration. In Cellulomonas fimi (strain ATCC 484 / DSM 20113 / JCM 1341 / CCUG 24087 / LMG 16345 / NBRC 15513 / NCIMB 8980 / NCTC 7547 / NRS-133), this protein is Exoglucanase A (cbhA).